The chain runs to 750 residues: MSDRYELFLTCPKGLEGLLAEEATALGLQETREHTSAIRGSADMETAYRLCLWSRLANRVLLVLKRFPMKDAEDLYHGVLDVEWQDHLESDGTIAVEFSGHGSGIDNTHFGALKVKDAIVDKLRTPDGERPSVDKINPDLRVHLRLDRGEAILSLDLSGHSLHQRGYRLQQGAAPLKENLAAAILIRAGWPRIAAEGGALADPMCGVGTFLVEAGMIAADIAPNIKRERWGFSAWLGHVPALWRKLHDEALARAEAGLAKTPSWIRGYEADPRLIQPGRNNIERAGLSDWIKVYQGEVATFEPRPDQNQKGLVICNPPYGERLGDEASLLYLYQNLGERLRQACLNWEAAVFTGAPDLGKRMGIRSHKQYSFWNGALPCKLLLIKVTPDQFVTGERRTPEQRQIERENPVEVEVVERKLNKNGNPIKPEPVVVEQARLSEGGQMFANRLQKNLKLMGKWVRREGIDCYRVYDADMPEYSLAIDLYHDWVHVQEYAAPKSIDPEKASARLFDALAAIPQALNIDKNRVVIKRRERQSGTKQYERQSAQGQFLEVSEGGVKLLVNLTDYLDTGLFLDHRPMRMRIQREASGKRFLNLFAYTATASVHAAKGGARSTTSVDLSRTYLDWARRNLSLNGFSDKNRLEQGDVMAWLQANRDEYDLIFIDPPTFSNSKRMEGIFDVQRDQVELIDLAMARLAPGGVLYFSNNFRKFVLDENLSQRYAVEDITAHTIDQDFARNGKIHRAWKIMARS.

The THUMP domain maps to 46–157; that stretch reads TAYRLCLWSR…RGEAILSLDL (112 aa).

This sequence belongs to the methyltransferase superfamily. RlmKL family.

It is found in the cytoplasm. It carries out the reaction guanosine(2445) in 23S rRNA + S-adenosyl-L-methionine = N(2)-methylguanosine(2445) in 23S rRNA + S-adenosyl-L-homocysteine + H(+). It catalyses the reaction guanosine(2069) in 23S rRNA + S-adenosyl-L-methionine = N(2)-methylguanosine(2069) in 23S rRNA + S-adenosyl-L-homocysteine + H(+). Specifically methylates the guanine in position 2445 (m2G2445) and the guanine in position 2069 (m7G2069) of 23S rRNA. This chain is Ribosomal RNA large subunit methyltransferase K/L, found in Pseudomonas syringae pv. syringae (strain B728a).